We begin with the raw amino-acid sequence, 231 residues long: Endo-1,4-beta-xylanase A (231 aa).

Residues 1-19 (MVSFKSLLVAVSALTGALA) form the signal peptide. Asparagine 32 carries N-linked (GlcNAc...) asparagine glycosylation. In terms of domain architecture, GH11 spans 41–229 (QVTGNSEGYH…SSGSSSIYVQ (189 aa)). Glutamate 125 serves as the catalytic Nucleophile. Glutamate 216 (proton donor) is an active-site residue.

This sequence belongs to the glycosyl hydrolase 11 (cellulase G) family.

The protein resides in the secreted. It carries out the reaction Endohydrolysis of (1-&gt;4)-beta-D-xylosidic linkages in xylans.. Its pathway is glycan degradation; xylan degradation. With respect to regulation, inhibited by the proteinaceous endoxylanase inhibitor I from T.aestivum (TAXI-I). Endo-1,4-beta-xylanase involved in the hydrolysis of xylan, a major structural heterogeneous polysaccharide found in plant biomass representing the second most abundant polysaccharide in the biosphere, after cellulose. Plays an important role in causing fusarium head blight (FHB) on cereal crops. This chain is Endo-1,4-beta-xylanase A (XYLA), found in Gibberella zeae (strain ATCC MYA-4620 / CBS 123657 / FGSC 9075 / NRRL 31084 / PH-1) (Wheat head blight fungus).